The sequence spans 198 residues: Ion-translocating oxidoreductase complex subunit B (198 aa).

Positions 1 to 26 are hydrophobic; it reads MTTIMIAVLAIALLATLFGAILGFAS. The region spanning 32–90 is the 4Fe-4S domain; sequence EADPIVDQIDAILPQTQCGQCGYPGCRPYAEAIANGDSINKCPPGGQATIEKLADLMGV. The [4Fe-4S] cluster site is built by C49, C52, C57, C73, C114, C117, C120, C124, C144, C147, C150, and C154. 4Fe-4S ferredoxin-type domains are found at residues 105 to 134 and 135 to 164; these read KVAF…GGTK and ALHT…MIPL.

The protein belongs to the 4Fe4S bacterial-type ferredoxin family. RnfB subfamily. The complex is composed of six subunits: RnfA, RnfB, RnfC, RnfD, RnfE and RnfG. [4Fe-4S] cluster serves as cofactor.

It is found in the cell inner membrane. In terms of biological role, part of a membrane-bound complex that couples electron transfer with translocation of ions across the membrane. The sequence is that of Ion-translocating oxidoreductase complex subunit B from Vibrio vulnificus (strain CMCP6).